We begin with the raw amino-acid sequence, 341 residues long: uncharacterized protein (341 aa).

This is an uncharacterized protein from Mycobacterium bovis (strain ATCC BAA-935 / AF2122/97).